A 196-amino-acid chain; its full sequence is DnaA initiator-associating protein DiaA (196 aa).

Positions 34 to 196 (LVHSLLNGNK…DNTLFPHQDD (163 aa)) constitute an SIS domain.

The protein belongs to the SIS family. DiaA subfamily. In terms of assembly, homotetramer; dimer of dimers.

Required for the timely initiation of chromosomal replication via direct interactions with the DnaA initiator protein. The polypeptide is DnaA initiator-associating protein DiaA (Citrobacter koseri (strain ATCC BAA-895 / CDC 4225-83 / SGSC4696)).